Reading from the N-terminus, the 104-residue chain is Urease subunit beta (104 aa).

It belongs to the urease beta subunit family. Heterotrimer of UreA (gamma), UreB (beta) and UreC (alpha) subunits. Three heterotrimers associate to form the active enzyme.

The protein localises to the cytoplasm. It catalyses the reaction urea + 2 H2O + H(+) = hydrogencarbonate + 2 NH4(+). It functions in the pathway nitrogen metabolism; urea degradation; CO(2) and NH(3) from urea (urease route): step 1/1. The protein is Urease subunit beta of Rhodococcus jostii (strain RHA1).